The sequence spans 89 residues: Putative antitoxin VapB42 (89 aa).

Possibly the antitoxin component of a type II toxin-antitoxin (TA) system. Its cognate toxin is VapC42 (Potential). The polypeptide is Putative antitoxin VapB42 (vapB42) (Mycobacterium tuberculosis (strain CDC 1551 / Oshkosh)).